We begin with the raw amino-acid sequence, 88 residues long: Small ribosomal subunit protein bS20 (88 aa).

The interval 1–21 (MANTTSAKKATRKIARRTAVN) is disordered.

This sequence belongs to the bacterial ribosomal protein bS20 family.

Functionally, binds directly to 16S ribosomal RNA. This chain is Small ribosomal subunit protein bS20, found in Sinorhizobium fredii (strain NBRC 101917 / NGR234).